Consider the following 171-residue polypeptide: Secreted protein CSS3 (171 aa).

An N-terminal signal peptide occupies residues 1 to 20 (MVPLFGLFCIFSQLYSLCSA). N-linked (GlcNAc...) asparagine glycosylation is found at Asn37, Asn139, and Asn159.

The protein resides in the cytoplasm. Its subcellular location is the secreted. This Saccharomyces cerevisiae (strain ATCC 204508 / S288c) (Baker's yeast) protein is Secreted protein CSS3.